Reading from the N-terminus, the 136-residue chain is Histone H3 (136 aa).

The interval 1 to 43 (MARTKQTARKSTGGKAPRKQLATKAARKSAPATGGVKKPHRYR) is disordered. Lysine 5 is subject to N6-methylated lysine. Lysine 10 carries the post-translational modification N6-acetyllysine; alternate. Lysine 10 carries the N6-methylated lysine; alternate modification. Serine 11 is subject to Phosphoserine. 2 positions are modified to N6-acetyllysine: lysine 15 and lysine 24. Residues lysine 28, lysine 37, and lysine 80 each carry the N6-methylated lysine modification.

It belongs to the histone H3 family. The nucleosome is a histone octamer containing two molecules each of H2A, H2B, H3 and H4 assembled in one H3-H4 heterotetramer and two H2A-H2B heterodimers. The octamer wraps approximately 147 bp of DNA. Post-translationally, acetylation is generally linked to gene activation. In terms of processing, methylation at Lys-5 is linked to gene activation. Methylation at Lys-10 is linked to gene repression.

It is found in the nucleus. It localises to the chromosome. Its function is as follows. Core component of nucleosome. Nucleosomes wrap and compact DNA into chromatin, limiting DNA accessibility to the cellular machineries which require DNA as a template. Histones thereby play a central role in transcription regulation, DNA repair, DNA replication and chromosomal stability. DNA accessibility is regulated via a complex set of post-translational modifications of histones, also called histone code, and nucleosome remodeling. The protein is Histone H3 of Platynereis dumerilii (Dumeril's clam worm).